A 572-amino-acid chain; its full sequence is Arginine--tRNA ligase (572 aa).

Positions 122 to 132 (PNLAKEMHVGH) match the 'HIGH' region motif.

Belongs to the class-I aminoacyl-tRNA synthetase family. As to quaternary structure, monomer.

Its subcellular location is the cytoplasm. The catalysed reaction is tRNA(Arg) + L-arginine + ATP = L-arginyl-tRNA(Arg) + AMP + diphosphate. This Neisseria meningitidis serogroup A / serotype 4A (strain DSM 15465 / Z2491) protein is Arginine--tRNA ligase.